The following is a 195-amino-acid chain: Nicotinamide riboside kinase 1 (195 aa).

Position 10–18 (10–18) interacts with ATP; that stretch reads GVTNGGKTT. Positions 17 and 36 each coordinate Mg(2+). The active-site Proton acceptor is Asp36. Substrate-binding positions include 36 to 39 and 55 to 56; these read DDFF and YD. Arg128 is an ATP binding site. Substrate-binding positions include Arg129 and 134-135; that span reads YE. ATP is bound by residues 132–134 and 172–174; these read RVY and RSE.

This sequence belongs to the uridine kinase family. NRK subfamily. In terms of assembly, monomer.

The catalysed reaction is beta-nicotinamide D-riboside + ATP = beta-nicotinamide D-ribonucleotide + ADP + H(+). The enzyme catalyses beta-D-ribosylnicotinate + ATP = nicotinate beta-D-ribonucleotide + ADP + H(+). It functions in the pathway cofactor biosynthesis; NAD(+) biosynthesis. In terms of biological role, catalyzes the phosphorylation of nicotinamide riboside (NR) and nicotinic acid riboside (NaR) to form nicotinamide mononucleotide (NMN) and nicotinic acid mononucleotide (NaMN). This Mus musculus (Mouse) protein is Nicotinamide riboside kinase 1 (Nmrk1).